The chain runs to 272 residues: Activator of basal transcription 1 (272 aa).

M1 carries the N-acetylmethionine modification. Residues 1–17 are compositionally biased toward basic and acidic residues; that stretch reads MEAEESEKAATEQEPLK. Positions 1–38 are disordered; the sequence is MEAEESEKAATEQEPLKGTEQTLDAEEEQEESEDAACG. A compositionally biased stretch (acidic residues) spans 23-34; that stretch reads LDAEEEQEESED. The 97-residue stretch at 46–142 folds into the RRM domain; that stretch reads GIVYLGHIPP…RRRSPFRYDL (97 aa). A coiled-coil region spans residues 161 to 191; the sequence is AFERQVRRQRLRAEVAQAKRETDFYLQSVER. The segment at 197–272 is disordered; that stretch reads AADGDPARPD…MEGPSLVRDS (76 aa).

Belongs to the ESF2/ABP1 family. In terms of assembly, interacts with ESF1/ABTAP. Interacts with IGHMBP2.

The protein resides in the nucleus. Its subcellular location is the nucleolus. Could be a novel TATA-binding protein (TBP) which can function as a basal transcription activator. Can act as a regulator of basal transcription for class II genes. The polypeptide is Activator of basal transcription 1 (ABT1) (Pongo abelii (Sumatran orangutan)).